Consider the following 429-residue polypeptide: Cytochrome P450 BJ-3 (429 aa).

A heme-binding site is contributed by cysteine 376.

Belongs to the cytochrome P450 family. Requires heme as cofactor.

In terms of biological role, cytochromes P450 are a group of heme-thiolate monooxygenases. They oxidize a variety of structurally unrelated compounds, including steroids, fatty acids, and xenobiotics. The protein is Cytochrome P450 BJ-3 (cyp114) of Bradyrhizobium diazoefficiens (strain JCM 10833 / BCRC 13528 / IAM 13628 / NBRC 14792 / USDA 110).